Here is a 213-residue protein sequence, read N- to C-terminus: Orotate phosphoribosyltransferase (213 aa).

Lysine 26 contacts 5-phospho-alpha-D-ribose 1-diphosphate. 34 to 35 serves as a coordination point for orotate; sequence FF. 5-phospho-alpha-D-ribose 1-diphosphate contacts are provided by residues 72-73, arginine 99, lysine 100, lysine 103, histidine 105, and 124-132; these read YK and DDVITAGTA. Positions 128 and 156 each coordinate orotate.

The protein belongs to the purine/pyrimidine phosphoribosyltransferase family. PyrE subfamily. As to quaternary structure, homodimer. Mg(2+) serves as cofactor.

It carries out the reaction orotidine 5'-phosphate + diphosphate = orotate + 5-phospho-alpha-D-ribose 1-diphosphate. Its pathway is pyrimidine metabolism; UMP biosynthesis via de novo pathway; UMP from orotate: step 1/2. Functionally, catalyzes the transfer of a ribosyl phosphate group from 5-phosphoribose 1-diphosphate to orotate, leading to the formation of orotidine monophosphate (OMP). The polypeptide is Orotate phosphoribosyltransferase (Pseudomonas aeruginosa (strain UCBPP-PA14)).